The sequence spans 91 residues: Em-like protein (91 aa).

2 stretches are compositionally biased toward basic and acidic residues: residues Met1–Glu18 and Asp31–Ile51. Positions Met1 to Pro91 are disordered. Gly residues predominate over residues Lys62–Gly73. A compositionally biased stretch (basic and acidic residues) spans Arg75–Pro91.

The protein belongs to the small hydrophilic plant seed protein family.

This Picea glauca (White spruce) protein is Em-like protein.